A 431-amino-acid chain; its full sequence is MSGSAPSIPNLLTLRGRIGGGGVTRGRYRGVIHRGGRGHGPGAPSASAAHDATIQGTDTDAAVSRLSAVQIGYIDDPYAELFAQSGPGAARRLPIINRGTYARTTAIDKLVDKFLDDTESSPEGRQIVSLGAGTDTRSLRLFSPSAPTPRKRVIYHEIDFPAMCEKKQRIVCSAPQLRSILSDPDSVEELSQHGGGNSWHSKAVAEKHKGSELWVHGLDLRAIAASQQPQQPLPPGVPIGSRGLHASPFTPGSTTQHEEQTEETSLPQQREPLTLTSLNPNLPTLIISECCLCYLPPSTASSIVSFFTTTIQSSLSIVIYEPIKPDDAFGKMMVSNLAAREIRMPTLEVYKEAEDQERRLREAGFSGGEGKGIGGARSKTIEQIWEEWTSQEEKERVDALEGLDEVEEWKLLAGHYIVVWGWRGVGVDLEI.

Residues R103, G131, D159, and 219 to 220 (DL) contribute to the S-adenosyl-L-methionine site. A disordered region spans residues 228–268 (QPQQPLPPGVPIGSRGLHASPFTPGSTTQHEEQTEETSLPQ). S-adenosyl-L-methionine is bound at residue E289.

The protein belongs to the methyltransferase superfamily. LCMT family.

It catalyses the reaction [phosphatase 2A protein]-C-terminal L-leucine + S-adenosyl-L-methionine = [phosphatase 2A protein]-C-terminal L-leucine methyl ester + S-adenosyl-L-homocysteine. Its function is as follows. Methylates the carboxyl group of the C-terminal leucine residue of protein phosphatase 2A catalytic subunits to form alpha-leucine ester residues. This is Leucine carboxyl methyltransferase 1 (ppm-1) from Neurospora crassa (strain ATCC 24698 / 74-OR23-1A / CBS 708.71 / DSM 1257 / FGSC 987).